Consider the following 156-residue polypeptide: Small ribosomal subunit protein uS7 (156 aa).

The protein belongs to the universal ribosomal protein uS7 family. In terms of assembly, part of the 30S ribosomal subunit. Contacts proteins S9 and S11.

One of the primary rRNA binding proteins, it binds directly to 16S rRNA where it nucleates assembly of the head domain of the 30S subunit. Is located at the subunit interface close to the decoding center, probably blocks exit of the E-site tRNA. This Dehalococcoides mccartyi (strain ATCC BAA-2266 / KCTC 15142 / 195) (Dehalococcoides ethenogenes (strain 195)) protein is Small ribosomal subunit protein uS7.